The sequence spans 470 residues: Ribosomal protein uS12 methylthiotransferase RimO (470 aa).

The MTTase N-terminal domain maps to 33-143 (NKIGFVSLGC…VLEHVHQYAP (111 aa)). The [4Fe-4S] cluster site is built by Cys-42, Cys-78, Cys-107, Cys-175, Cys-179, and Cys-182. The region spanning 161-398 (LTPKHYAYLK…MLVQQEISAA (238 aa)) is the Radical SAM core domain. The 67-residue stretch at 401–467 (QKRIGSTMQV…EYDLWGSILH (67 aa)) folds into the TRAM domain.

This sequence belongs to the methylthiotransferase family. RimO subfamily. [4Fe-4S] cluster serves as cofactor.

The protein resides in the cytoplasm. It carries out the reaction L-aspartate(89)-[ribosomal protein uS12]-hydrogen + (sulfur carrier)-SH + AH2 + 2 S-adenosyl-L-methionine = 3-methylsulfanyl-L-aspartate(89)-[ribosomal protein uS12]-hydrogen + (sulfur carrier)-H + 5'-deoxyadenosine + L-methionine + A + S-adenosyl-L-homocysteine + 2 H(+). In terms of biological role, catalyzes the methylthiolation of an aspartic acid residue of ribosomal protein uS12. The chain is Ribosomal protein uS12 methylthiotransferase RimO from Vibrio cholerae serotype O1 (strain ATCC 39315 / El Tor Inaba N16961).